The primary structure comprises 568 residues: Urease subunit alpha (568 aa).

A Urease domain is found at 130–568 (GGIDTHIHFI…LPMAQRYFLF (439 aa)). Positions 135, 137, and 218 each coordinate Ni(2+). Lysine 218 carries the N6-carboxylysine modification. Histidine 220 serves as a coordination point for substrate. Ni(2+) contacts are provided by histidine 247 and histidine 273. The Proton donor role is filled by histidine 321. Aspartate 361 is a binding site for Ni(2+).

This sequence belongs to the metallo-dependent hydrolases superfamily. Urease alpha subunit family. In terms of assembly, heterotrimer of UreA (gamma), UreB (beta) and UreC (alpha) subunits. Three heterotrimers associate to form the active enzyme. It depends on Ni cation as a cofactor. Carboxylation allows a single lysine to coordinate two nickel ions.

It localises to the cytoplasm. The enzyme catalyses urea + 2 H2O + H(+) = hydrogencarbonate + 2 NH4(+). The protein operates within nitrogen metabolism; urea degradation; CO(2) and NH(3) from urea (urease route): step 1/1. This Burkholderia pseudomallei (strain 668) protein is Urease subunit alpha.